The chain runs to 201 residues: Large ribosomal subunit protein uL4 (201 aa).

Positions 45 to 72 (AQKTRAEVTGSGKKPWRQKGTGRARAGS) are disordered.

The protein belongs to the universal ribosomal protein uL4 family. In terms of assembly, part of the 50S ribosomal subunit.

In terms of biological role, one of the primary rRNA binding proteins, this protein initially binds near the 5'-end of the 23S rRNA. It is important during the early stages of 50S assembly. It makes multiple contacts with different domains of the 23S rRNA in the assembled 50S subunit and ribosome. Its function is as follows. Forms part of the polypeptide exit tunnel. In Shewanella frigidimarina (strain NCIMB 400), this protein is Large ribosomal subunit protein uL4.